The chain runs to 199 residues: Chaperone protein TorD (199 aa).

It belongs to the TorD/DmsD family. TorD subfamily.

The protein localises to the cytoplasm. Involved in the biogenesis of TorA. Acts on TorA before the insertion of the molybdenum cofactor and, as a result, probably favors a conformation of the apoenzyme that is competent for acquiring the cofactor. This is Chaperone protein TorD from Escherichia coli O45:K1 (strain S88 / ExPEC).